The chain runs to 37 residues: Large ribosomal subunit protein bL36 (37 aa).

Belongs to the bacterial ribosomal protein bL36 family.

This chain is Large ribosomal subunit protein bL36, found in Acidithiobacillus ferrooxidans (strain ATCC 23270 / DSM 14882 / CIP 104768 / NCIMB 8455) (Ferrobacillus ferrooxidans (strain ATCC 23270)).